Here is a 448-residue protein sequence, read N- to C-terminus: MSSDVSGTESGSESGPESVPEPVPEPGPEPESEPGPGPAPGPGPGPAPGPGPGLGREPGQRYQPCQLCPEHGKPLSWFCLSERRPVCATCAGFGGRCHRHRIRRAEEHAEELRNKIVDHCEKLQLQSAGITKYVAEVLQGKNQKAMIMANATREVIIQRLSLVRCLCESEEQRLLEQVHSEEERAHQCILTQRAHWDDKLRKLDSLRTSMVDMLTHLNDLQLIQMEQEILERAEEAEGILEPQESEKLSFNEKCAWSPLLTQLWATSVLGSLSGMEDVLIDERTVGPLLNLSEDRKTLTFNAKKSKVCSDDPERFDHWPNALAVNAFQTGLHAWAVNVKHSCAYKVGVASAQLPRKGSGSDCRLGHNAFSWVFSRYDQEFCFSHNGNHEPLALLRCPTQLGLLLDLQAGELIFYEPASGTVLHIHRESFPHRLFPVFAVADQVISIVC.

A compositionally biased stretch (low complexity) spans 1-18 (MSSDVSGTESGSESGPES). Residues 1-58 (MSSDVSGTESGSESGPESVPEPVPEPGPEPESEPGPGPAPGPGPGPAPGPGPGLGREP) are disordered. The span at 19-51 (VPEPVPEPGPEPESEPGPGPAPGPGPGPAPGPG) shows a compositional bias: pro residues. Residues 63 to 111 (QPCQLCPEHGKPLSWFCLSERRPVCATCAGFGGRCHRHRIRRAEEHAEE) form a B box-type zinc finger. In terms of domain architecture, B30.2/SPRY spans 257–448 (SPLLTQLWAT…VADQVISIVC (192 aa)).

In terms of assembly, interacts with TRPV5 and TRPV6. Interacts with YWHAZ/14-3-3 protein zeta. Predominantly expressed in testis. Expressed in brain at low levels.

It localises to the cytoplasm. Its subcellular location is the membrane. In terms of biological role, may regulate epithelial calcium transport by inhibiting TRPV5 activity. The chain is B box and SPRY domain-containing protein (Bspry) from Rattus norvegicus (Rat).